Consider the following 354-residue polypeptide: UDP-N-acetylglucosamine--N-acetylmuramyl-(pentapeptide) pyrophosphoryl-undecaprenol N-acetylglucosamine transferase (354 aa).

UDP-N-acetyl-alpha-D-glucosamine is bound by residues 11 to 13 (TAG), R164, S194, and Q289.

This sequence belongs to the glycosyltransferase 28 family. MurG subfamily.

It localises to the cell membrane. It catalyses the reaction di-trans,octa-cis-undecaprenyl diphospho-N-acetyl-alpha-D-muramoyl-L-alanyl-D-glutamyl-meso-2,6-diaminopimeloyl-D-alanyl-D-alanine + UDP-N-acetyl-alpha-D-glucosamine = di-trans,octa-cis-undecaprenyl diphospho-[N-acetyl-alpha-D-glucosaminyl-(1-&gt;4)]-N-acetyl-alpha-D-muramoyl-L-alanyl-D-glutamyl-meso-2,6-diaminopimeloyl-D-alanyl-D-alanine + UDP + H(+). Its pathway is cell wall biogenesis; peptidoglycan biosynthesis. Its function is as follows. Cell wall formation. Catalyzes the transfer of a GlcNAc subunit on undecaprenyl-pyrophosphoryl-MurNAc-pentapeptide (lipid intermediate I) to form undecaprenyl-pyrophosphoryl-MurNAc-(pentapeptide)GlcNAc (lipid intermediate II). In Clostridium botulinum (strain 657 / Type Ba4), this protein is UDP-N-acetylglucosamine--N-acetylmuramyl-(pentapeptide) pyrophosphoryl-undecaprenol N-acetylglucosamine transferase.